Here is a 115-residue protein sequence, read N- to C-terminus: Large ribosomal subunit protein bL20 (115 aa).

This sequence belongs to the bacterial ribosomal protein bL20 family.

Its function is as follows. Binds directly to 23S ribosomal RNA and is necessary for the in vitro assembly process of the 50S ribosomal subunit. It is not involved in the protein synthesizing functions of that subunit. This is Large ribosomal subunit protein bL20 from Mycoplasmoides gallisepticum (strain R(low / passage 15 / clone 2)) (Mycoplasma gallisepticum).